The chain runs to 520 residues: 5'-nucleotidase domain-containing protein 2 (520 aa).

D73 acts as the Nucleophile in catalysis. 3 residues coordinate Mg(2+): D73, D75, and D358. Catalysis depends on D75, which acts as the Proton donor.

The protein belongs to the 5'(3')-deoxyribonucleotidase family. As to quaternary structure, interacts with tyrosine 3-monooxygenase TH; the interaction results in reduced phosphorylation and decreased catalytic activity of TH.

It is found in the cytoplasm. Functionally, promotes dephosphorylation of tyrosine 3-monooxygenase TH which decreases TH catalytic activity and leads to reduced synthesis of catecholamines including dopamine, noradrenaline and adrenaline. The exact mechanism of activity is unknown but may act as a phosphatase or promote the activity of phosphatases or may inhibit phosphorylation by acting as a barrier to interfere with protein kinase access. The protein is 5'-nucleotidase domain-containing protein 2 (NT5DC2) of Homo sapiens (Human).